The chain runs to 103 residues: Acyl-CoA-binding protein (103 aa).

In terms of domain architecture, ACB spans 18 to 103 (HQADFDEAAE…AKTMVEKYGI (86 aa)). An acyl-CoA is bound by residues lysine 30, 45 to 49 (YGFYK), lysine 67, lysine 71, and tyrosine 90.

Belongs to the ACBP family. Monomer.

It is found in the endoplasmic reticulum. The protein localises to the golgi apparatus. In terms of biological role, binds medium- and long-chain acyl-CoA esters with very high affinity and may function as an intracellular carrier of acyl-CoA esters. It is also able to displace diazepam from the benzodiazepine (BZD) recognition site located on the GABA type A receptor. It is therefore possible that this protein also acts as a neuropeptide to modulate the action of the GABA receptor. In Anas platyrhynchos (Mallard), this protein is Acyl-CoA-binding protein (DBI).